Here is a 208-residue protein sequence, read N- to C-terminus: 3-demethoxyubiquinol 3-hydroxylase (208 aa).

6 residues coordinate Fe cation: E57, E87, H90, E139, E171, and H174.

It belongs to the COQ7 family. The cofactor is Fe cation.

The protein localises to the cell membrane. It catalyses the reaction a 5-methoxy-2-methyl-3-(all-trans-polyprenyl)benzene-1,4-diol + AH2 + O2 = a 3-demethylubiquinol + A + H2O. The protein operates within cofactor biosynthesis; ubiquinone biosynthesis. Catalyzes the hydroxylation of 2-nonaprenyl-3-methyl-6-methoxy-1,4-benzoquinol during ubiquinone biosynthesis. This is 3-demethoxyubiquinol 3-hydroxylase from Burkholderia cenocepacia (strain ATCC BAA-245 / DSM 16553 / LMG 16656 / NCTC 13227 / J2315 / CF5610) (Burkholderia cepacia (strain J2315)).